A 340-amino-acid chain; its full sequence is tRNA N6-adenosine threonylcarbamoyltransferase (340 aa).

The Fe cation site is built by H111 and H115. Substrate contacts are provided by residues 133 to 137 (VVSGG), D166, G179, D183, and N273. Residue D301 coordinates Fe cation.

The protein belongs to the KAE1 / TsaD family. It depends on Fe(2+) as a cofactor.

It is found in the cytoplasm. It catalyses the reaction L-threonylcarbamoyladenylate + adenosine(37) in tRNA = N(6)-L-threonylcarbamoyladenosine(37) in tRNA + AMP + H(+). In terms of biological role, required for the formation of a threonylcarbamoyl group on adenosine at position 37 (t(6)A37) in tRNAs that read codons beginning with adenine. Is involved in the transfer of the threonylcarbamoyl moiety of threonylcarbamoyl-AMP (TC-AMP) to the N6 group of A37, together with TsaE and TsaB. TsaD likely plays a direct catalytic role in this reaction. The sequence is that of tRNA N6-adenosine threonylcarbamoyltransferase from Pelobacter propionicus (strain DSM 2379 / NBRC 103807 / OttBd1).